Consider the following 344-residue polypeptide: L-rhamnose-proton symporter (344 aa).

10 helical membrane-spanning segments follow: residues 4–24 (AITMGIFWHLIGAASAACFYA), 38–58 (WSVGGIVSWIILPWAISALLL), 68–88 (FSLSTLLPVFLFGAMWGIGNI), 101–121 (MGIGIAIGITLIVGTLMTPII), 137–157 (TLLGVLVALIGVGIVTRAGQL), 175–195 (LVLAVMCGIFSAGMSFAMNAA), 214–234 (LPSYVVIMGGGAIINLGFCFI), 259–279 (VLLSALGGLMWYLQFFFYAWG), 290–310 (ISWMLHMSFYVLCGGIVGLVL), and 323–343 (VLSLGCVVIIVAANIVGIGMA).

Belongs to the L-rhamnose transporter (TC 2.A.7.6) family.

It localises to the cell inner membrane. The enzyme catalyses L-rhamnopyranose(in) + H(+)(in) = L-rhamnopyranose(out) + H(+)(out). Uptake of L-rhamnose across the cytoplasmic membrane with the concomitant transport of protons into the cell (symport system). The sequence is that of L-rhamnose-proton symporter from Escherichia coli O127:H6 (strain E2348/69 / EPEC).